Here is a 386-residue protein sequence, read N- to C-terminus: Lycopene beta-cyclase (386 aa).

4-34 (DVLLAGAGLANGLIALALRAARPDLRVLLLD) is a binding site for NAD(+).

It belongs to the lycopene cyclase family. The cofactor is FAD.

It catalyses the reaction a carotenoid psi-end group = a carotenoid beta-end derivative. The enzyme catalyses all-trans-lycopene = gamma-carotene. The catalysed reaction is gamma-carotene = all-trans-beta-carotene. The protein operates within carotenoid biosynthesis; astaxanthin biosynthesis. Functionally, catalyzes the double cyclization reaction which converts lycopene to beta-carotene. The sequence is that of Lycopene beta-cyclase from Paracoccus sp. (strain N81106 / MBIC 01143) (Agrobacterium aurantiacum).